The following is a 124-amino-acid chain: Large ribosomal subunit protein mL51 (124 aa).

Residues Met1–Met31 constitute a mitochondrion transit peptide.

It belongs to the mitochondrion-specific ribosomal protein mL51 family. In terms of assembly, component of the mitochondrial ribosome large subunit (39S) which comprises a 16S rRNA and about 50 distinct proteins.

The protein resides in the mitochondrion. The polypeptide is Large ribosomal subunit protein mL51 (mrpl51) (Danio rerio (Zebrafish)).